The following is a 589-amino-acid chain: Aspartate--tRNA ligase (589 aa).

Glu-172 lines the L-aspartate pocket. An aspartate region spans residues 196-199 (QLFK). Arg-218 contributes to the L-aspartate binding site. ATP is bound by residues 218-220 (RDE) and Gln-227. His-449 contributes to the L-aspartate binding site. An ATP-binding site is contributed by Glu-483. Residue Arg-490 participates in L-aspartate binding. Residue 535-538 (GLDR) coordinates ATP.

This sequence belongs to the class-II aminoacyl-tRNA synthetase family. Type 1 subfamily. Homodimer.

It is found in the cytoplasm. The catalysed reaction is tRNA(Asp) + L-aspartate + ATP = L-aspartyl-tRNA(Asp) + AMP + diphosphate. Its function is as follows. Catalyzes the attachment of L-aspartate to tRNA(Asp) in a two-step reaction: L-aspartate is first activated by ATP to form Asp-AMP and then transferred to the acceptor end of tRNA(Asp). In Actinobacillus succinogenes (strain ATCC 55618 / DSM 22257 / CCUG 43843 / 130Z), this protein is Aspartate--tRNA ligase.